We begin with the raw amino-acid sequence, 449 residues long: Chlorobenzene dioxygenase subunit alpha (449 aa).

The Rieske domain occupies 54–163 (WLLLGHETQI…VATYKGLIFA (110 aa)). Cys-96, His-98, Cys-116, and His-119 together coordinate [2Fe-2S] cluster. Residues His-222, His-228, and Asp-376 each contribute to the Fe cation site.

This sequence belongs to the bacterial ring-hydroxylating dioxygenase alpha subunit family. As to quaternary structure, this dioxygenase system consists of four proteins: the two subunits of the oxygenase component (TecA1 and TecA2), a ferredoxin (TecA3) and a ferredoxin reductase (TecA4). The cofactor is [2Fe-2S] cluster. Fe cation is required as a cofactor.

The enzyme catalyses chlorobenzene + NADH + O2 + H(+) = (1R,2R)-3-chlorocyclohexa-3,5-diene-1,2-diol + NAD(+). Its pathway is aromatic compound metabolism. Part of the oxygenase component of the chlorobenzene dioxygenase system that catalyzes the dihydroxylation of a range of aromatic compounds, including chlorinated benzenes and toluenes, and dinuclear aromatics such as biphenyl and dibenzo-p-dioxin. The alpha subunit is responsible for substrate specificity. The polypeptide is Chlorobenzene dioxygenase subunit alpha (Cupriavidus sp. (strain PS12)).